The chain runs to 222 residues: Ribosomal RNA small subunit methyltransferase G (222 aa).

S-adenosyl-L-methionine contacts are provided by residues G73, L78, 124–125 (AE), and R137.

It belongs to the methyltransferase superfamily. RNA methyltransferase RsmG family.

It is found in the cytoplasm. In terms of biological role, specifically methylates the N7 position of guanine in position 518 of 16S rRNA. The protein is Ribosomal RNA small subunit methyltransferase G of Acidothermus cellulolyticus (strain ATCC 43068 / DSM 8971 / 11B).